The chain runs to 352 residues: Nicotinate-nucleotide--dimethylbenzimidazole phosphoribosyltransferase (352 aa).

The Proton acceptor role is filled by Glu-318.

This sequence belongs to the CobT family.

The catalysed reaction is 5,6-dimethylbenzimidazole + nicotinate beta-D-ribonucleotide = alpha-ribazole 5'-phosphate + nicotinate + H(+). The protein operates within nucleoside biosynthesis; alpha-ribazole biosynthesis; alpha-ribazole from 5,6-dimethylbenzimidazole: step 1/2. Its function is as follows. Catalyzes the synthesis of alpha-ribazole-5'-phosphate from nicotinate mononucleotide (NAMN) and 5,6-dimethylbenzimidazole (DMB). The protein is Nicotinate-nucleotide--dimethylbenzimidazole phosphoribosyltransferase of Azotobacter vinelandii (strain DJ / ATCC BAA-1303).